A 1544-amino-acid polypeptide reads, in one-letter code: Transcriptional activator GLI3 (1544 aa).

Composition is skewed to polar residues over residues 1–10 (MEAQSHSSTT) and 402–429 (NPVQ…SSTG). 2 disordered regions span residues 1–83 (MEAQ…EERA) and 373–477 (SAFG…QEPE). The span at 463–476 (VKEEGDKDESKQEP) shows a compositional bias: basic and acidic residues. The segment at 482–509 (TNCHWEGCSREFDTQEQLVHHINNDHIH) adopts a C2H2-type 1 zinc-finger fold. The C2H2-type 2; degenerate zinc finger occupies 520–542 (LDCSREQKPFKAQYMLVVHMRRH). 3 consecutive C2H2-type zinc fingers follow at residues 548 to 572 (HKCT…LRSH), 578 to 603 (YVCE…NRTH), and 609 to 634 (YVCK…KTVH). Disordered stretches follow at residues 622–728 (DPSS…YSNN), 865–919 (RSSG…DLPS), 1126–1155 (SVVL…VSKS), and 1327–1368 (HYQG…GNQS). Residues 634 to 650 (HGPEAHVTKKQRGDIHP) are compositionally biased toward basic and acidic residues. Residues 660–685 (SHSQTRSPGQQTQGATGEQKDLNSTT) show a composition bias toward polar residues. Residues 686 to 701 (SRREECLQVKAVKSEK) show a composition bias toward basic and acidic residues. The span at 702–728 (PMTSQPSPGGQSTCSSEQSPISNYSNN) shows a compositional bias: polar residues. A compositionally biased stretch (low complexity) spans 865 to 882 (RSSGISPCFSSRRSSDAS). Over residues 1330-1355 (GVNQSSPMTLGQVSPTSQSSLHQGPQ) the composition is skewed to polar residues.

The protein belongs to the GLI C2H2-type zinc-finger protein family. Post-translationally, phosphorylation is essential for its proteolytic processing. The repressor form (GLI3R), a C-terminally truncated form is generated from the full-length GLI3 protein (GLI3FL) through proteolytic processing.

The protein localises to the nucleus. It is found in the cytoplasm. Functionally, has a dual function as a transcriptional activator and a repressor of the sonic hedgehog (Shh) pathway, and plays a role in limb development. The full-length GLI3 form (GLI3FL) acts as an activator (GLI3A) while GLI3R, its C-terminally truncated form, acts as a repressor. This Gallus gallus (Chicken) protein is Transcriptional activator GLI3 (GLI3).